Reading from the N-terminus, the 276-residue chain is Energy-coupling factor transporter ATP-binding protein EcfA2 (276 aa).

Positions 1-233 (MKTPFERLAL…GEEMAGWGLD (233 aa)) constitute an ABC transporter domain. 27–34 (GHTGSGKS) is an ATP binding site. The Proton acceptor role is filled by E158.

This sequence belongs to the ABC transporter superfamily. Energy-coupling factor EcfA family. Forms a stable energy-coupling factor (ECF) transporter complex composed of 2 membrane-embedded substrate-binding proteins (S component), 2 ATP-binding proteins (A component) and 2 transmembrane proteins (T component).

The protein localises to the cell membrane. In terms of biological role, ATP-binding (A) component of a common energy-coupling factor (ECF) ABC-transporter complex. Unlike classic ABC transporters this ECF transporter provides the energy necessary to transport a number of different substrates. This Bacillus subtilis (strain 168) protein is Energy-coupling factor transporter ATP-binding protein EcfA2.